We begin with the raw amino-acid sequence, 59 residues long: Large ribosomal subunit protein uL30 (59 aa).

This sequence belongs to the universal ribosomal protein uL30 family. As to quaternary structure, part of the 50S ribosomal subunit.

In Geobacter sulfurreducens (strain ATCC 51573 / DSM 12127 / PCA), this protein is Large ribosomal subunit protein uL30.